Reading from the N-terminus, the 493-residue chain is Cardiolipin synthase 1 (493 aa).

2 helical membrane-spanning segments follow: residues 13-33 (FTII…IIIF) and 45-65 (WAWL…YLFF). PLD phosphodiesterase domains lie at 228-255 (MNNR…GDEY) and 406-433 (ENGF…DFRS). Catalysis depends on residues His233, Lys235, Asp240, His411, Lys413, and Asp418.

This sequence belongs to the phospholipase D family. Cardiolipin synthase subfamily.

It localises to the cell membrane. It catalyses the reaction 2 a 1,2-diacyl-sn-glycero-3-phospho-(1'-sn-glycerol) = a cardiolipin + glycerol. Its function is as follows. Catalyzes the reversible phosphatidyl group transfer from one phosphatidylglycerol molecule to another to form cardiolipin (CL) (diphosphatidylglycerol) and glycerol. This Staphylococcus aureus (strain COL) protein is Cardiolipin synthase 1 (cls1).